The chain runs to 424 residues: Imidazolonepropionase (424 aa).

Residues H85 and H87 each coordinate Fe(3+). Positions 85 and 87 each coordinate Zn(2+). 3 residues coordinate 4-imidazolone-5-propanoate: R94, Y157, and H190. Y157 provides a ligand contact to N-formimidoyl-L-glutamate. H255 is a Fe(3+) binding site. H255 provides a ligand contact to Zn(2+). Position 258 (E258) interacts with 4-imidazolone-5-propanoate. Residue D329 participates in Fe(3+) binding. Zn(2+) is bound at residue D329. N331 and G333 together coordinate N-formimidoyl-L-glutamate. S334 is a binding site for 4-imidazolone-5-propanoate.

The protein belongs to the metallo-dependent hydrolases superfamily. HutI family. It depends on Zn(2+) as a cofactor. Requires Fe(3+) as cofactor.

It localises to the cytoplasm. It carries out the reaction 4-imidazolone-5-propanoate + H2O = N-formimidoyl-L-glutamate. Its pathway is amino-acid degradation; L-histidine degradation into L-glutamate; N-formimidoyl-L-glutamate from L-histidine: step 3/3. Functionally, catalyzes the hydrolytic cleavage of the carbon-nitrogen bond in imidazolone-5-propanoate to yield N-formimidoyl-L-glutamate. It is the third step in the universal histidine degradation pathway. The polypeptide is Imidazolonepropionase (Brevibacillus brevis (strain 47 / JCM 6285 / NBRC 100599)).